A 225-amino-acid polypeptide reads, in one-letter code: Transcription factor MYB1 (225 aa).

HTH myb-type domains lie at 11–67 (LGRV…KPSI) and 68–118 (KRGH…YKKH). 2 consecutive DNA-binding regions (H-T-H motif) follow at residues 39–63 (WKRV…LNYL) and 91–114 (WSLI…NTHL).

As to quaternary structure, no interactions with bHLH.

It is found in the nucleus. Its function is as follows. Activates DODA1 and CYP76AD1 in the betalain red pigment pathway. The protein is Transcription factor MYB1 of Beta vulgaris (Sugar beet).